Consider the following 234-residue polypeptide: Phycobilisome rod-core linker polypeptide cpcG (234 aa).

The region spanning Ser11 to Arg191 is the PBS-linker domain.

The protein belongs to the phycobilisome linker protein family. As to quaternary structure, the phycobilisome is a hemidiscoidal structure that is composed of two distinct substructures: a core complex and a number of rods radiating from the core.

Its subcellular location is the plastid. It localises to the chloroplast thylakoid membrane. Its function is as follows. Rod-core linker protein required for attachment of phycocyanin to allophycocyanin in cores of phycobilisomes. Linker polypeptides determine the state of aggregation and the location of the disk-shaped phycobiliprotein units within the phycobilisome and modulate their spectroscopic properties in order to mediate a directed and optimal energy transfer. The sequence is that of Phycobilisome rod-core linker polypeptide cpcG (cpcG) from Cyanidium caldarium (Red alga).